A 90-amino-acid chain; its full sequence is Small ribosomal subunit protein uS15c (90 aa).

As to quaternary structure, component of the chloroplast small ribosomal subunit (SSU). Mature 70S chloroplast ribosomes of higher plants consist of a small (30S) and a large (50S) subunit. The 30S small subunit contains 1 molecule of ribosomal RNA (16S rRNA) and 24 different proteins. The 50S large subunit contains 3 rRNA molecules (23S, 5S and 4.5S rRNA) and 33 different proteins.

It localises to the plastid. It is found in the chloroplast. Functionally, component of the chloroplast ribosome (chloro-ribosome), a dedicated translation machinery responsible for the synthesis of chloroplast genome-encoded proteins, including proteins of the transcription and translation machinery and components of the photosynthetic apparatus. This is Small ribosomal subunit protein uS15c (rps15) from Spinacia oleracea (Spinach).